Reading from the N-terminus, the 270-residue chain is Acyl-[acyl-carrier-protein]--UDP-N-acetylglucosamine O-acyltransferase (270 aa).

Belongs to the transferase hexapeptide repeat family. LpxA subfamily. As to quaternary structure, homotrimer.

Its subcellular location is the cytoplasm. It catalyses the reaction a (3R)-hydroxyacyl-[ACP] + UDP-N-acetyl-alpha-D-glucosamine = a UDP-3-O-[(3R)-3-hydroxyacyl]-N-acetyl-alpha-D-glucosamine + holo-[ACP]. The protein operates within glycolipid biosynthesis; lipid IV(A) biosynthesis; lipid IV(A) from (3R)-3-hydroxytetradecanoyl-[acyl-carrier-protein] and UDP-N-acetyl-alpha-D-glucosamine: step 1/6. Its function is as follows. Involved in the biosynthesis of lipid A, a phosphorylated glycolipid that anchors the lipopolysaccharide to the outer membrane of the cell. The chain is Acyl-[acyl-carrier-protein]--UDP-N-acetylglucosamine O-acyltransferase from Bartonella tribocorum (strain CIP 105476 / IBS 506).